Consider the following 490-residue polypeptide: uncharacterized protein (490 aa).

The N-terminal stretch at 1 to 19 (MSITSVSLYVYLICAGGHA) is a signal peptide.

It belongs to the mimivirus L137 family.

This is an uncharacterized protein from Acanthamoeba polyphaga (Amoeba).